The sequence spans 397 residues: Arginine biosynthesis bifunctional protein ArgJ (397 aa).

Residues Thr-143, Lys-169, Thr-180, Glu-266, Asn-392, and Thr-397 each coordinate substrate. Thr-180 serves as the catalytic Nucleophile.

This sequence belongs to the ArgJ family. As to quaternary structure, heterotetramer of two alpha and two beta chains.

It is found in the cytoplasm. It carries out the reaction N(2)-acetyl-L-ornithine + L-glutamate = N-acetyl-L-glutamate + L-ornithine. The enzyme catalyses L-glutamate + acetyl-CoA = N-acetyl-L-glutamate + CoA + H(+). Its pathway is amino-acid biosynthesis; L-arginine biosynthesis; L-ornithine and N-acetyl-L-glutamate from L-glutamate and N(2)-acetyl-L-ornithine (cyclic): step 1/1. It functions in the pathway amino-acid biosynthesis; L-arginine biosynthesis; N(2)-acetyl-L-ornithine from L-glutamate: step 1/4. With respect to regulation, competitively inhibited by L-ornithine. Its function is as follows. Catalyzes two activities which are involved in the cyclic version of arginine biosynthesis: the synthesis of N-acetylglutamate from glutamate and acetyl-CoA as the acetyl donor, and of ornithine by transacetylation between N(2)-acetylornithine and glutamate. This Thermotoga neapolitana (strain ATCC 49049 / DSM 4359 / NBRC 107923 / NS-E) protein is Arginine biosynthesis bifunctional protein ArgJ.